The following is a 243-amino-acid chain: Protein DMP8 (243 aa).

The tract at residues 1 to 37 (MEKTEESVGIRVYTTTTTQNPSPTSSRSPKPVPLSSL) is disordered. A compositionally biased stretch (low complexity) spans 14-29 (TTTTTQNPSPTSSRSP). Transmembrane regions (helical) follow at residues 70–90 (MLVN…LPTI), 98–118 (GINT…CFFF), 174–194 (VNDF…AFSD), and 212–232 (VMES…LVFP).

This sequence belongs to the plant DMP1 protein family. As to expression, restricted to flowers.

The protein resides in the endoplasmic reticulum membrane. The protein localises to the vacuole membrane. Its function is as follows. Involved in membrane remodeling. The protein is Protein DMP8 of Arabidopsis thaliana (Mouse-ear cress).